The sequence spans 328 residues: tRNA uridine(34) hydroxylase (328 aa).

A Rhodanese domain is found at 130 to 224 (LDKDTVVLDT…YGKDPEVQGE (95 aa)). Residue C184 is the Cysteine persulfide intermediate of the active site.

The protein belongs to the TrhO family.

It carries out the reaction uridine(34) in tRNA + AH2 + O2 = 5-hydroxyuridine(34) in tRNA + A + H2O. Catalyzes oxygen-dependent 5-hydroxyuridine (ho5U) modification at position 34 in tRNAs. This is tRNA uridine(34) hydroxylase from Streptococcus pneumoniae (strain ATCC 700669 / Spain 23F-1).